The sequence spans 318 residues: Protein-L-histidine N-pros-methyltransferase (318 aa).

Residues 1 to 18 form the signal peptide; the sequence is MRLLAGWLCLSLASVWLA. Residue Asn35 is glycosylated (N-linked (GlcNAc...) asparagine). S-adenosyl-L-homocysteine contacts are provided by Glu174, Asn210, and Tyr295.

It belongs to the METTL9 family.

The protein localises to the endoplasmic reticulum. Its subcellular location is the mitochondrion. It carries out the reaction L-histidyl-[protein] + S-adenosyl-L-methionine = N(pros)-methyl-L-histidyl-[protein] + S-adenosyl-L-homocysteine + H(+). In terms of biological role, protein-histidine N-methyltransferase that specifically catalyzes 1-methylhistidine (pros-methylhistidine) methylation of target proteins. Specifically methylates the second His of proteins with a His-x-His (HxH) motif (where 'x' is preferably a small amino acid), while exploiting the first one as a recognition signature. Catalyzes methylation of target proteins such as S100A9, NDUFB3, SLC39A5, SLC39A7, ARMC6 and DNAJB12; 1-methylhistidine modification may affect the binding of zinc and other metals to its target proteins. Constitutes the main methyltransferase for the 1-methylhistidine modification in cell. This Bos taurus (Bovine) protein is Protein-L-histidine N-pros-methyltransferase.